The primary structure comprises 250 residues: Bcl-2-like protein 12 (250 aa).

The disordered stretch occupies residues glycine 24–phenylalanine 46. Serine 29 is subject to Phosphoserine. Residue threonine 33 is modified to Phosphothreonine. Position 37 is a phosphoserine (serine 37). Position 60 is an omega-N-methylarginine (arginine 60). Phosphoserine occurs at positions 111, 158, 159, 161, and 189. The BH2 motif lies at tryptophan 227–leucine 238.

It belongs to the Bcl-2 family. As to expression, expressed mainly in breast, thymus, prostate, fetal liver, colon, placenta, pancreas, small intestine, spinal cord, kidney, and bone marrow and to a lesser extent in many other tissues. Isoform 2 is primarily expressed in skeletal muscle.

The sequence is that of Bcl-2-like protein 12 from Homo sapiens (Human).